Here is a 245-residue protein sequence, read N- to C-terminus: Ureidoacrylate amidohydrolase RutB (245 aa).

Catalysis depends on Asp38, which acts as the Proton acceptor. The active site involves Lys147. Cys180 acts as the Nucleophile in catalysis.

It belongs to the isochorismatase family. RutB subfamily.

It catalyses the reaction (Z)-3-ureidoacrylate + H2O + H(+) = (Z)-3-aminoacrylate + NH4(+) + CO2. It carries out the reaction (Z)-3-ureidoacrylate + H2O = (Z)-3-aminoacrylate + carbamate + H(+). The catalysed reaction is (Z)-2-methylureidoacrylate + H2O + H(+) = (Z)-2-methylaminoacrylate + NH4(+) + CO2. Hydrolyzes ureidoacrylate to form aminoacrylate and carbamate. The carbamate hydrolyzes spontaneously, thereby releasing one of the nitrogen atoms of the pyrimidine ring as ammonia and one of its carbon atoms as CO2. The chain is Ureidoacrylate amidohydrolase RutB from Acinetobacter baylyi (strain ATCC 33305 / BD413 / ADP1).